Reading from the N-terminus, the 301-residue chain is Tyrosine recombinase XerC (301 aa).

Residues 2–84 (TNTQFYITNF…TLRSFFSYLY (83 aa)) enclose the Core-binding (CB) domain. Residues 105–291 (ALPKFLTVDD…DLKHLIEVYD (187 aa)) form the Tyr recombinase domain. Catalysis depends on residues Arg-145, Lys-169, His-243, Arg-246, and His-269. Tyr-278 functions as the O-(3'-phospho-DNA)-tyrosine intermediate in the catalytic mechanism.

This sequence belongs to the 'phage' integrase family. XerC subfamily. As to quaternary structure, forms a cyclic heterotetrameric complex composed of two molecules of XerC and two molecules of XerD.

The protein localises to the cytoplasm. Functionally, site-specific tyrosine recombinase, which acts by catalyzing the cutting and rejoining of the recombining DNA molecules. The XerC-XerD complex is essential to convert dimers of the bacterial chromosome into monomers to permit their segregation at cell division. It also contributes to the segregational stability of plasmids. This Thermodesulfovibrio yellowstonii (strain ATCC 51303 / DSM 11347 / YP87) protein is Tyrosine recombinase XerC.